The primary structure comprises 985 residues: Lateral signaling target protein 2 homolog (985 aa).

Disordered stretches follow at residues 310–453, 498–520, 533–640, and 747–892; these read PLGS…ETDE, EYGAGEQQRQRHRDGQEDEPSTS, LRLP…SSLS, and DNVF…TTTA. Composition is skewed to low complexity over residues 327-348, 384-393, and 401-422; these read HPTTSSNNNNNNGDTTGTTNTH, SLSPNSTPTA, and PSHSIASTSSSATGSTHPPADW. Residues 423–453 are compositionally biased toward acidic residues; it reads SDGDDEDEEDDDDDIEVEEEELDSTDDETDE. Serine 537 and serine 538 each carry phosphoserine. Composition is skewed to basic residues over residues 563 to 589 and 596 to 607; these read VYRHRHSHRHHHRHHHHHHQRHHHHQH and HPHRTTRSGRKR. Low complexity-rich tracts occupy residues 629 to 640 and 761 to 770; these read ASGDTSAASSLS and NGNQANASAQ. Polar residues predominate over residues 776-785; that stretch reads GSIQRNNTVD. Residue serine 808 is modified to Phosphoserine. The segment covering 812–866 has biased composition (low complexity); sequence QESASTSTSSSQLHQEQQQLQIQVQRQRNNSVGSNTPSSASSTSSSSEQNSPVSA. Residues 875-885 show a composition bias toward polar residues; it reads QSNNETQMPSS. The segment at 904–964 adopts an FYVE-type zinc-finger fold; the sequence is DGKAPRCMSC…VCRECYVREV (61 aa). Positions 910, 913, 926, 929, 934, 937, 956, and 959 each coordinate Zn(2+).

Belongs to the lst-2 family.

Functionally, negative regulator of epidermal growth factor receptor (EGFR) signaling. The protein is Lateral signaling target protein 2 homolog of Drosophila ananassae (Fruit fly).